A 407-amino-acid chain; its full sequence is Chorismate synthase (407 aa).

Residues R40 and R46 each coordinate NADP(+). FMN-binding positions include 135-137, 256-257, G300, 315-319, and R341; these read RAS, QA, and KPIST.

Belongs to the chorismate synthase family. Homotetramer. FMNH2 serves as cofactor.

The catalysed reaction is 5-O-(1-carboxyvinyl)-3-phosphoshikimate = chorismate + phosphate. The protein operates within metabolic intermediate biosynthesis; chorismate biosynthesis; chorismate from D-erythrose 4-phosphate and phosphoenolpyruvate: step 7/7. Functionally, catalyzes the anti-1,4-elimination of the C-3 phosphate and the C-6 proR hydrogen from 5-enolpyruvylshikimate-3-phosphate (EPSP) to yield chorismate, which is the branch point compound that serves as the starting substrate for the three terminal pathways of aromatic amino acid biosynthesis. This reaction introduces a second double bond into the aromatic ring system. This is Chorismate synthase from Mycobacterium leprae (strain Br4923).